Reading from the N-terminus, the 481-residue chain is Phosphoglucosamine mutase (481 aa).

Ser128 serves as the catalytic Phosphoserine intermediate. Mg(2+) contacts are provided by Ser128, Asp269, Asp271, and Asp273. Ser128 bears the Phosphoserine mark.

Belongs to the phosphohexose mutase family. Mg(2+) is required as a cofactor. Activated by phosphorylation.

The enzyme catalyses alpha-D-glucosamine 1-phosphate = D-glucosamine 6-phosphate. In terms of biological role, catalyzes the conversion of glucosamine-6-phosphate to glucosamine-1-phosphate. The protein is Phosphoglucosamine mutase of Synechocystis sp. (strain ATCC 27184 / PCC 6803 / Kazusa).